Consider the following 310-residue polypeptide: Homoserine kinase (310 aa).

An ATP-binding site is contributed by 91–101; it reads PLARGLGSSAA.

Belongs to the GHMP kinase family. Homoserine kinase subfamily.

It localises to the cytoplasm. The enzyme catalyses L-homoserine + ATP = O-phospho-L-homoserine + ADP + H(+). The protein operates within amino-acid biosynthesis; L-threonine biosynthesis; L-threonine from L-aspartate: step 4/5. In terms of biological role, catalyzes the ATP-dependent phosphorylation of L-homoserine to L-homoserine phosphate. In Bacillus pumilus (strain SAFR-032), this protein is Homoserine kinase.